The chain runs to 290 residues: 33 kDa chaperonin (290 aa).

Intrachain disulfides connect Cys-235–Cys-237 and Cys-268–Cys-271.

Belongs to the HSP33 family. Post-translationally, under oxidizing conditions two disulfide bonds are formed involving the reactive cysteines. Under reducing conditions zinc is bound to the reactive cysteines and the protein is inactive.

It localises to the cytoplasm. Functionally, redox regulated molecular chaperone. Protects both thermally unfolding and oxidatively damaged proteins from irreversible aggregation. Plays an important role in the bacterial defense system toward oxidative stress. The sequence is that of 33 kDa chaperonin from Streptococcus pneumoniae (strain JJA).